The sequence spans 307 residues: Ribulose bisphosphate carboxylase/oxygenase activase, chloroplastic (307 aa).

The N-terminal 46 residues, 1-46 (MSIPDDKEAGTIDEFLQKEGVLDILQKLDHDLVGLKPVKDRVREIA), are a transit peptide targeting the chloroplast. 73-80 (GSPGTGKT) serves as a coordination point for ATP.

It belongs to the CbxX/CfxQ family. Forms homooligomers. Forms heterohexameric rings with the plastid-encoded Rca subunit consisting of 3 of each nuclear- and plastidial-encoded subunits that alternate in the ring.

The protein localises to the plastid. Its subcellular location is the chloroplast. Functionally, required for the expression of ribulose 1,5-bisphosphate carboxylase/oxygenase (RuBisCo). ATPase involved in the activation of red-type RuBisCo, which tends to form inactive complexes with its substrate ribulose 1,5-bisphosphate (RuBP). Catalyzes the release of RuBP from inhibited RuBisCo in an ATP-dependent manner. Activation of RuBisCO involves the ATP-dependent carboxylation of the epsilon-amino group of lysine leading to a carbamate structure. The nuclear-encoded subunit plays a more critical role in activase function than the plastidial-encoded subunit. In Cyanidioschyzon merolae (strain NIES-3377 / 10D) (Unicellular red alga), this protein is Ribulose bisphosphate carboxylase/oxygenase activase, chloroplastic.